The sequence spans 495 residues: RuBisCO large subunit-binding protein subunit alpha (495 aa).

It belongs to the chaperonin (HSP60) family. Oligomer of probably six alpha and six beta subunits.

It localises to the plastid. Its subcellular location is the chloroplast. Functionally, this protein binds RuBisCO small and large subunits and is implicated in the assembly of the enzyme oligomer. This chain is RuBisCO large subunit-binding protein subunit alpha, found in Ricinus communis (Castor bean).